A 107-amino-acid chain; its full sequence is Nucleoid-associated protein NE0434 (107 aa).

This sequence belongs to the YbaB/EbfC family. Homodimer.

The protein resides in the cytoplasm. The protein localises to the nucleoid. In terms of biological role, binds to DNA and alters its conformation. May be involved in regulation of gene expression, nucleoid organization and DNA protection. The sequence is that of Nucleoid-associated protein NE0434 from Nitrosomonas europaea (strain ATCC 19718 / CIP 103999 / KCTC 2705 / NBRC 14298).